We begin with the raw amino-acid sequence, 596 residues long: Cell adhesion molecule CEACAM20 (596 aa).

The first 30 residues, 1 to 30 (MGPADSWGHHWMGILLSASLCTVWSPPAAA), serve as a signal peptide directing secretion. The Extracellular segment spans residues 31-450 (QLTLNANPLD…SSLSSGAIAG (420 aa)). Ig-like C2-type domains lie at 58–154 (PQIH…PIFL), 160–246 (PDPV…GTLK), 256–341 (PQVV…LELT), and 346–432 (PDQV…TSVL). The cysteines at positions 90 and 138 are disulfide-linked. 2 N-linked (GlcNAc...) asparagine glycosylation sites follow: N96 and N105. Residues C276 and C324 are joined by a disulfide bond. N-linked (GlcNAc...) asparagine glycans are attached at residues N280, N306, N317, N368, and N415. A disulfide bridge links C375 with C416. Residues 451-471 (IVIGILAVIAVASELGYFLCI) traverse the membrane as a helical segment. At 472–585 (RNARRPSRKT…SIYEELVNPE (114 aa)) the chain is on the cytoplasmic side. Disordered regions lie at residues 477–510 (PSRKTTEDPSHETSQPIPKEEHPTEPSSESLSPE) and 527–563 (QPPDLPEETYETKLPSASRRGNSFSPWKPPPKPLMPP). A compositionally biased stretch (low complexity) spans 501–510 (EPSSESLSPE). The span at 553–562 (WKPPPKPLMP) shows a compositional bias: pro residues. 2 positions are modified to phosphotyrosine: Y578 and Y589.

This sequence belongs to the immunoglobulin superfamily. CEA family. As to quaternary structure, interacts (via extracellular domain) with PTPRH (via extracellular domain); the interaction dephosphorylates CEACAM20. Interacts (phosphorylated form) with SYK (via SH2 domains); the interaction further enhances CEACAM20 phosphorylation. Phosphorylated on tyrosine residues by SYK, SRC and FYN in vitro.

Its subcellular location is the cell projection. It localises to the microvillus membrane. The protein resides in the apical cell membrane. In terms of biological role, together with the tyrosine-protein kinase SYK, enhances production of the cytokine CXCL8/IL-8 via the NFKB pathway and may thus have a role in the intestinal immune response. The sequence is that of Cell adhesion molecule CEACAM20 from Homo sapiens (Human).